A 386-amino-acid polypeptide reads, in one-letter code: Zinc finger CCCH domain-containing protein 2 (386 aa).

2 consecutive C3H1-type zinc fingers follow at residues 116 to 143 (HYSGTACPDFRKGGCKRGDACEYAHGVF) and 151 to 175 (RYRTQPCKDGTACRRRVCFFAHTPD). Disordered regions lie at residues 180–200 (LPAQQSSPRSVASSPLAESYD) and 220–252 (SSPTSTLMSPPKSPPSESPPLSPDGAAAIRRGS). Residues 182 to 192 (AQQSSPRSVAS) show a composition bias toward polar residues. Residues 220-229 (SSPTSTLMSP) show a composition bias toward low complexity. Over residues 230 to 241 (PKSPPSESPPLS) the composition is skewed to pro residues.

It localises to the nucleus. Involved in leaf senescence delay. May repress jasmonic acid (JA) signaling role in promoting leaf senescence. May regulate panicle development and pollination/fertilization process. This Oryza sativa subsp. japonica (Rice) protein is Zinc finger CCCH domain-containing protein 2.